The chain runs to 706 residues: Dual specificity calcium/calmodulin-dependent 3',5'-cyclic nucleotide phosphodiesterase 1C (706 aa).

Residue M1 is modified to N-acetylmethionine. Residues 123–146 (EKPRFKSIVHAVQAGIFVERMYRR) form a calmodulin-binding region. In terms of domain architecture, PDEase spans 151–528 (VGLSYPPAVI…ERWRAKVPKE (378 aa)). The Proton donor role is filled by H228. H232, H268, D269, and D376 together coordinate Zn(2+). D269 is a Mg(2+) binding site. Disordered stretches follow at residues 453 to 497 (LIDE…INNS) and 524 to 655 (KVPK…IKPP). 2 stretches are compositionally biased toward polar residues: residues 456-476 (ESSQ…INSS) and 483-497 (VKSS…INNS). Basic and acidic residues-rich tracts occupy residues 524 to 554 (KVPK…EAKS), 580 to 597 (RKGD…KAGE), and 603 to 630 (DLKD…DGTK). Residues 638–647 (APSTSSTSRI) are compositionally biased toward polar residues.

It belongs to the cyclic nucleotide phosphodiesterase family. PDE1 subfamily. As to quaternary structure, homodimer. Zn(2+) is required as a cofactor. Mg(2+) serves as cofactor. Highly expressed in testis and at moderate levels in heart. As to expression, expressed at a moderate level in brain, the cerebellum, testis, heart and olfactory epithelium. In terms of tissue distribution, highly expressed in olfactory epithelium and at very low levels, if any, in other tissues. In the cochlea, expressed in the inner and outer hair cells (at protein level). In the brain, highly expressed in the neurons of the granule layer of the cerebellum, some Purkinje cells, the central amygdaloid nucleus, and the interpolar spinal trigem nucleus and, at moderate levels, in the glomerular and external plexiform layer of the olfactory bulb as well as in parts of the caudate-putamen and olfactory tubercle.

Its subcellular location is the lysosome. It carries out the reaction a nucleoside 3',5'-cyclic phosphate + H2O = a nucleoside 5'-phosphate + H(+). The catalysed reaction is 3',5'-cyclic GMP + H2O = GMP + H(+). It catalyses the reaction 3',5'-cyclic AMP + H2O = AMP + H(+). Type I PDE are activated by the binding of calmodulin in the presence of Ca(2+). Different splice variants may have different sensitivities to Ca(2+). With respect to regulation, exhibits a higher sensitivity to Ca(2+) stimulation than isoforms 1 and 2. Functionally, calmodulin-dependent cyclic nucleotide phosphodiesterase with a dual specificity for cAMP and cGMP, which are key regulators of many important physiological processes. Exhibits high affinity for both cAMP and cGMP. Modulates the amplitude and duration of the cAMP signal in sensory cilia in response to odorant stimulation, hence contributing to the generation of action potentials. Regulates smooth muscle cell proliferation. Regulates the stability of growth factor receptors, including PDGFRB. This chain is Dual specificity calcium/calmodulin-dependent 3',5'-cyclic nucleotide phosphodiesterase 1C, found in Mus musculus (Mouse).